The following is a 226-amino-acid chain: Clarin-3 (226 aa).

A helical membrane pass occupies residues 8–28 (LMFLSSFFTSLGSFIVICSIL). A glycan (N-linked (GlcNAc...) asparagine) is linked at asparagine 83. 3 helical membrane-spanning segments follow: residues 92-112 (VTIL…GFTF), 129-149 (VYTW…LFVA), and 181-201 (FWLI…IIFY).

The protein belongs to the clarin family.

The protein resides in the membrane. This is Clarin-3 (CLRN3) from Homo sapiens (Human).